Reading from the N-terminus, the 257-residue chain is Imidazole glycerol phosphate synthase subunit HisF (257 aa).

Catalysis depends on residues Asp-11 and Asp-130.

The protein belongs to the HisA/HisF family. In terms of assembly, heterodimer of HisH and HisF.

It localises to the cytoplasm. It catalyses the reaction 5-[(5-phospho-1-deoxy-D-ribulos-1-ylimino)methylamino]-1-(5-phospho-beta-D-ribosyl)imidazole-4-carboxamide + L-glutamine = D-erythro-1-(imidazol-4-yl)glycerol 3-phosphate + 5-amino-1-(5-phospho-beta-D-ribosyl)imidazole-4-carboxamide + L-glutamate + H(+). The protein operates within amino-acid biosynthesis; L-histidine biosynthesis; L-histidine from 5-phospho-alpha-D-ribose 1-diphosphate: step 5/9. Its function is as follows. IGPS catalyzes the conversion of PRFAR and glutamine to IGP, AICAR and glutamate. The HisF subunit catalyzes the cyclization activity that produces IGP and AICAR from PRFAR using the ammonia provided by the HisH subunit. In Actinobacillus succinogenes (strain ATCC 55618 / DSM 22257 / CCUG 43843 / 130Z), this protein is Imidazole glycerol phosphate synthase subunit HisF.